We begin with the raw amino-acid sequence, 454 residues long: Protein disulfide-isomerase TMX3 (454 aa).

The signal sequence occupies residues 1–24; that stretch reads MAAWKSWAALRLCATVVLLDMVVC. The region spanning 25–128 is the Thioredoxin domain; the sequence is KGFVEDLDES…KDDIIEFAHR (104 aa). At 25-375 the chain is on the lumenal side; the sequence is KGFVEDLDES…TIVSIFKSSP (351 aa). Catalysis depends on nucleophile residues C53 and C56. C53 and C56 form a disulfide bridge. Residues N258 and N313 are each glycosylated (N-linked (GlcNAc...) asparagine). A helical membrane pass occupies residues 376–396; the sequence is LMGCFLFGLPLGVISIMCYGI. At 397–454 the chain is on the cytoplasmic side; that stretch reads YTADTDGGYIEERYEVSKSENENQEQIEESKEQQEPSSGGSVVPTVQEPKDVLEKKKD. The tract at residues 412–454 is disordered; that stretch reads VSKSENENQEQIEESKEQQEPSSGGSVVPTVQEPKDVLEKKKD. Positions 444 to 454 are enriched in basic and acidic residues; the sequence is EPKDVLEKKKD. The Di-lysine motif motif lies at 451–454; sequence KKKD.

The protein belongs to the protein disulfide isomerase family.

The protein localises to the endoplasmic reticulum membrane. It carries out the reaction Catalyzes the rearrangement of -S-S- bonds in proteins.. Its function is as follows. Probable disulfide isomerase, which participates in the folding of proteins containing disulfide bonds. May act as a dithiol oxidase. Acts as a regulator of endoplasmic reticulum-mitochondria contact sites via its ability to regulate redox signals. This Pongo abelii (Sumatran orangutan) protein is Protein disulfide-isomerase TMX3 (TMX3).